We begin with the raw amino-acid sequence, 101 residues long: Phosphoprotein OPG062 (101 aa).

The tract at residues 48–76 (VDKPSSPASERRPSSPSRCERMNNPGKQV) is disordered. Phosphoserine occurs at positions 53 and 62. Basic and acidic residues predominate over residues 56-68 (SERRPSSPSRCER).

Belongs to the orthopoxvirus OPG062 family. Self-associates to form high molecular-weight forms. Interacts with protein OPG157. Interacts with host RICTOR and RPTOR; these interactions disrupt the mTORC1 and mTORC2 crosstalk. In terms of processing, phosphorylated on two serines. While these phosphorylations do not play a role in virion assembly; they are essential for the interaction with host RICTOR and RPTOR.

It is found in the virion. In terms of biological role, plays an essential role in virion assembly and morphogenesis. Also plays a role in the inhibition of host immune response by dysregulating mTOR. Sequesters host RICTOR and RPTOR, thereby disrupting mTORC1 and mTORC2 crosstalk. In turn, blocks the host antiviral response in part through mTOR-dependent degradation of cGAS, the primary poxvirus sensor. In Variola virus (isolate Human/India/Ind3/1967) (VARV), this protein is Phosphoprotein OPG062 (OPG062).